Consider the following 326-residue polypeptide: Transmembrane protein 171 (326 aa).

The next 4 membrane-spanning stretches (helical) occupy residues 22-42, 57-77, 114-134, and 161-181; these read IFFL…LSIF, MMLK…VILA, LIFG…GIWV, and FLSL…FFVV. The interval 229–326 is disordered; sequence FPESSASAAA…LSPSSEPSPP (98 aa). Low complexity predominate over residues 230 to 240; the sequence is PESSASAAARS. A compositionally biased stretch (polar residues) spans 257-266; it reads SIFQSGSPTP. Composition is skewed to low complexity over residues 288–302 and 312–326; these read SSSE…LSEL and ATTT…PSPP.

It is found in the membrane. This chain is Transmembrane protein 171 (TMEM171), found in Bos taurus (Bovine).